The chain runs to 423 residues: UDP-N-acetylglucosamine 1-carboxyvinyltransferase (423 aa).

22–23 (KN) serves as a coordination point for phosphoenolpyruvate. Residue Arg93 participates in UDP-N-acetyl-alpha-D-glucosamine binding. Cys117 acts as the Proton donor in catalysis. Residue Cys117 is modified to 2-(S-cysteinyl)pyruvic acid O-phosphothioketal. Residues 122–126 (RPIDL), Asp307, and Val329 each bind UDP-N-acetyl-alpha-D-glucosamine.

This sequence belongs to the EPSP synthase family. MurA subfamily.

It localises to the cytoplasm. It carries out the reaction phosphoenolpyruvate + UDP-N-acetyl-alpha-D-glucosamine = UDP-N-acetyl-3-O-(1-carboxyvinyl)-alpha-D-glucosamine + phosphate. The protein operates within cell wall biogenesis; peptidoglycan biosynthesis. Functionally, cell wall formation. Adds enolpyruvyl to UDP-N-acetylglucosamine. The polypeptide is UDP-N-acetylglucosamine 1-carboxyvinyltransferase (Chlorobium chlorochromatii (strain CaD3)).